The primary structure comprises 43 residues: Histone H3 (43 aa).

As to quaternary structure, the nucleosome is a histone octamer containing two molecules each of H2A, H2B, H3 and H4 assembled in one H3-H4 heterotetramer and two H2A-H2B heterodimers. The octamer wraps approximately 147 bp of DNA.

The protein localises to the nucleus. Its subcellular location is the chromosome. Its function is as follows. Core component of nucleosome. Nucleosomes wrap and compact DNA into chromatin, limiting DNA accessibility to the cellular machineries which require DNA as a template. Histones thereby play a central role in transcription regulation, DNA repair, DNA replication and chromosomal stability. DNA accessibility is regulated via a complex set of post-translational modifications of histones, also called histone code, and nucleosome remodeling. This chain is Histone H3, found in Penaeus vannamei (Whiteleg shrimp).